The following is a 257-amino-acid chain: Adenylate kinase (257 aa).

Gly-51–Thr-56 is a binding site for ATP. Residues Ala-71 to Val-100 are NMP. Residues Thr-72, Arg-77, Gly-98–Val-100, Gly-127–Arg-130, and Gln-134 contribute to the AMP site. Residues Gly-168–Asp-205 form an LID region. ATP contacts are provided by residues Arg-169 and Ser-178–Tyr-179. Arg-202 and Arg-213 together coordinate AMP. Gln-241 contacts ATP.

The protein belongs to the adenylate kinase family. AK2 subfamily. In terms of assembly, monomer.

The protein resides in the cytoplasm. It localises to the cytosol. The protein localises to the mitochondrion intermembrane space. The enzyme catalyses AMP + ATP = 2 ADP. Catalyzes the reversible transfer of the terminal phosphate group between ATP and AMP. Plays an important role in cellular energy homeostasis and in adenine nucleotide metabolism. Adenylate kinase activity is critical for regulation of the phosphate utilization and the AMP de novo biosynthesis pathways. The protein is Adenylate kinase (adk1) of Aspergillus terreus (strain NIH 2624 / FGSC A1156).